Reading from the N-terminus, the 598-residue chain is NADH-quinone oxidoreductase subunit C/D (598 aa).

Residues 1–189 (MTDLTTSDST…DPFVLTKQKE (189 aa)) form an NADH dehydrogenase I subunit C region. Positions 213–598 (DFMFLNLGPN…IDFVMSDVDR (386 aa)) are NADH dehydrogenase I subunit D.

This sequence in the N-terminal section; belongs to the complex I 30 kDa subunit family. The protein in the C-terminal section; belongs to the complex I 49 kDa subunit family. As to quaternary structure, NDH-1 is composed of 13 different subunits. Subunits NuoB, CD, E, F, and G constitute the peripheral sector of the complex.

It is found in the cell inner membrane. The enzyme catalyses a quinone + NADH + 5 H(+)(in) = a quinol + NAD(+) + 4 H(+)(out). Its function is as follows. NDH-1 shuttles electrons from NADH, via FMN and iron-sulfur (Fe-S) centers, to quinones in the respiratory chain. The immediate electron acceptor for the enzyme in this species is believed to be ubiquinone. Couples the redox reaction to proton translocation (for every two electrons transferred, four hydrogen ions are translocated across the cytoplasmic membrane), and thus conserves the redox energy in a proton gradient. The chain is NADH-quinone oxidoreductase subunit C/D from Yersinia enterocolitica serotype O:8 / biotype 1B (strain NCTC 13174 / 8081).